Consider the following 93-residue polypeptide: Serine rich endogenous peptide 6 (93 aa).

The signal sequence occupies residues 1-27; the sequence is MGTKCYSKLRYVVVLVLLLFVFPCSLS. 2 short sequence motifs (SCOOP motif) span residues 48–62 and 73–87; these read GIIA…APNI and ISEA…GGGR. Residues 52-93 are disordered; the sequence is GSSPSGQAPNINNNYHGRRLMISEARPSKSKKGGGREPESPG. A compositionally biased stretch (polar residues) spans 53–66; it reads SSPSGQAPNINNNY. Short sequence motifs (sxS motif essential for MIK2 binding) lie at residues 54–56 and 79–81; these read SPS and SKS.

This sequence belongs to the serine rich endogenous peptide (SCOOP) phytocytokine family. As to quaternary structure, interacts with MIK2 (via extracellular leucine-rich repeat domain); this interaction triggers the formation of complex between MIK2 and the BAK1/SERK3 and SERK4 coreceptors, and subsequent BAK1 activation by phosphorylation. As to expression, mostly expressed in seedlings shoots, and, to a lower extent, in roots.

The protein localises to the cell membrane. It localises to the secreted. It is found in the extracellular space. The protein resides in the apoplast. In terms of biological role, brassicaceae-specific phytocytokine (plant endogenous peptide released into the apoplast) perceived by MIK2 in a BAK1/SERK3 and SERK4 coreceptors-dependent manner, that modulates various physiological and antimicrobial processes including growth prevention and reactive oxygen species (ROS) response regulation. Inhibits root growth. In Arabidopsis thaliana (Mouse-ear cress), this protein is Serine rich endogenous peptide 6.